The chain runs to 481 residues: MVGPRTRGYAIHKLGFCSVVMLGINSIIGAGIFLTPGEVIGLAGPFAPMAYVLAGIFAGVVAIVFATAARYVRTNGASYAYTTAAFGRRIGIYVGVTHAITASIAWGVLASFFVSTLLRVAFPDKAWADAEQLFSVKTLTFLGFIGVLLAINLFGNRAIKWANGTSTVGKAFALSAFIVGGLWIITTQHVNNYATAWSAYSATPYSLLGVAEIGKGTFSSMALATIVALYAFTGFESIANAAEEMDAPDRNLPRAIPIAIFSVGAIYLLTLTVAMLLGSNKIAASDDTVKLAAAIGNATFRTIIVVGALISMFGINVAASFGAPRLWTALADSGVLPTRLSRKNQYDVPMVSFAITASLALAFPLALRFDNLHLTGLAVIARFVQFIIVPIALIALARSQAVEHAAVRRNAFTDKVLPLVAIVVSVGLAVSYDYRCIFLVRGGPNYFSIALIVITFIVVPAMAYLHYYRIIRRVGDRPSTR.

A run of 11 helical transmembrane segments spans residues 14 to 34 (LGFC…GIFL), 46 to 66 (FAPM…IVFA), 90 to 110 (IGIY…GVLA), 134 to 154 (FSVK…INLF), 167 to 187 (TVGK…IITT), 218 to 238 (FSSM…FESI), 258 to 278 (IAIF…MLLG), 303 to 323 (IIVV…SFGA), 377 to 397 (LAVI…IALA), 411 to 431 (AFTD…LAVS), and 446 to 466 (YFSI…AYLH).

It belongs to the amino acid-polyamine-organocation (APC) superfamily.

Its subcellular location is the cell membrane. Functionally, probable amino-acid or metabolite transport protein. This is an uncharacterized protein from Mycobacterium tuberculosis (strain CDC 1551 / Oshkosh).